Here is a 1062-residue protein sequence, read N- to C-terminus: Carbamoyl phosphate synthase large chain (1062 aa).

Residues 1–401 (MPKRTDIHKI…AMQKAVQSLE (401 aa)) form a carboxyphosphate synthetic domain region. Arginine 129, arginine 169, glycine 175, glycine 176, lysine 208, isoleucine 210, glutamate 215, glycine 241, isoleucine 242, histidine 243, glutamine 284, and glutamate 298 together coordinate ATP. The ATP-grasp 1 domain occupies 133–327 (KELCQKLGEP…IAKMAAKIAI (195 aa)). Mg(2+) contacts are provided by glutamine 284, glutamate 298, and asparagine 300. Positions 284, 298, and 300 each coordinate Mn(2+). The interval 402–546 (IDEKDLYSAK…YSTYDGENES (145 aa)) is oligomerization domain. Residues 547–929 (RKSGKKSVIV…ALYKAFAGAK (383 aa)) are carbamoyl phosphate synthetic domain. The 191-residue stretch at 671 to 861 (DQIIKSLHLH…MAQVATRVIM (191 aa)) folds into the ATP-grasp 2 domain. ATP-binding residues include arginine 707, aspartate 746, leucine 748, glutamate 752, glycine 777, valine 778, histidine 779, serine 780, glutamine 820, and glutamate 832. Residues glutamine 820, glutamate 832, and asparagine 834 each contribute to the Mg(2+) site. The Mn(2+) site is built by glutamine 820, glutamate 832, and asparagine 834. In terms of domain architecture, MGS-like spans 930–1062 (MQLPENGNVL…NRSFATDALK (133 aa)). The segment at 930-1062 (MQLPENGNVL…NRSFATDALK (133 aa)) is allosteric domain.

The protein belongs to the CarB family. Composed of two chains; the small (or glutamine) chain promotes the hydrolysis of glutamine to ammonia, which is used by the large (or ammonia) chain to synthesize carbamoyl phosphate. Tetramer of heterodimers (alpha,beta)4. It depends on Mg(2+) as a cofactor. Mn(2+) serves as cofactor.

The catalysed reaction is hydrogencarbonate + L-glutamine + 2 ATP + H2O = carbamoyl phosphate + L-glutamate + 2 ADP + phosphate + 2 H(+). It catalyses the reaction hydrogencarbonate + NH4(+) + 2 ATP = carbamoyl phosphate + 2 ADP + phosphate + 2 H(+). It functions in the pathway amino-acid biosynthesis; L-arginine biosynthesis; carbamoyl phosphate from bicarbonate: step 1/1. The protein operates within pyrimidine metabolism; UMP biosynthesis via de novo pathway; (S)-dihydroorotate from bicarbonate: step 1/3. In terms of biological role, large subunit of the glutamine-dependent carbamoyl phosphate synthetase (CPSase). CPSase catalyzes the formation of carbamoyl phosphate from the ammonia moiety of glutamine, carbonate, and phosphate donated by ATP, constituting the first step of 2 biosynthetic pathways, one leading to arginine and/or urea and the other to pyrimidine nucleotides. The large subunit (synthetase) binds the substrates ammonia (free or transferred from glutamine from the small subunit), hydrogencarbonate and ATP and carries out an ATP-coupled ligase reaction, activating hydrogencarbonate by forming carboxy phosphate which reacts with ammonia to form carbamoyl phosphate. This is Carbamoyl phosphate synthase large chain from Lactobacillus helveticus (strain DPC 4571).